Reading from the N-terminus, the 610-residue chain is UvrABC system protein C (610 aa).

Positions 13 to 91 constitute a GIY-YIG domain; that stretch reads HLPGVYRMYD…IKENQPKYNV (79 aa). Residues 201–236 enclose the UVR domain; that stretch reads GQVIEHLVQKMENAAQELDFEAAARFRDQIQSVRAV.

Belongs to the UvrC family. As to quaternary structure, interacts with UvrB in an incision complex.

It is found in the cytoplasm. Functionally, the UvrABC repair system catalyzes the recognition and processing of DNA lesions. UvrC both incises the 5' and 3' sides of the lesion. The N-terminal half is responsible for the 3' incision and the C-terminal half is responsible for the 5' incision. In Actinobacillus pleuropneumoniae serotype 3 (strain JL03), this protein is UvrABC system protein C.